We begin with the raw amino-acid sequence, 838 residues long: Phosphatidylethanolamine N-methyltransferase 1 (838 aa).

Over 1–48 (MATEIITEKKEIVARTRSSGITFNPPVTHDMVRSLFDPTIKKSFLECC) the chain is Lumenal. The chain crosses the membrane as a helical span at residues 49–69 (ITLTILANFVLCYYLINWFGL). Residues 70–73 (SQAK) lie on the Cytoplasmic side of the membrane. A helical transmembrane segment spans residues 74–94 (LIFLIQYVYWRLAYNLGIGII). Residues 95–157 (LHYQSHYESL…ELNCWLLFRQ (63 aa)) are Lumenal-facing. Residues 158-178 (FVDLILMQDFTTYIIYVYLSL) form a helical membrane-spanning segment. Over 179–184 (PTDVSS) the chain is Cytoplasmic. A helical transmembrane segment spans residues 185-205 (LINWKSLIGIAMILFNIWVKI). Residues 206–236 (DAHRVVKDYAWYWGDFFFLQDAELTFDGVFN) are Lumenal-facing. The helical transmembrane segment at 237–257 (ISPHPMYSIGYLGYYGLSLIC) threads the bilayer. The Cytoplasmic segment spans residues 258-261 (GDYR). A helical transmembrane segment spans residues 262–282 (VLLVSVGGHFLQFLFLKYVES). Residues 283–328 (PHIERTYGSDSPSNSTQHQIDDLIAKENYDYSRPLINTGILFENFQ) are Lumenal-facing. The helical transmembrane segment at 329–349 (FLRFSDYFTVSTILVLFSWFF) threads the bilayer. The Cytoplasmic portion of the chain corresponds to 350–356 (TSKPSNN). A helical transmembrane segment spans residues 357 to 377 (FLFVLTLLTKLTTWLLTSWIL). Residues 378–403 (FQQSNRKWFTRLFLKNGYTQIYSYQQ) are Lumenal-facing. The chain crosses the membrane as a helical span at residues 404–424 (WQFLYNYSLIVTNTLLFLHTL). Residues 425 to 435 (SELYSIQSSDG) are Cytoplasmic-facing. A helical transmembrane segment spans residues 436–456 (LNNSHVIFGLLLCAIQIWCNV). At 457-517 (ETRDAISDFG…VLMTNFSKTN (61 aa)) the chain is on the lumenal side. Residues 518–538 (VTLAVLWTVTNLIFVKLIEEP) form a helical membrane-spanning segment. Over 539-838 (HVSKVYGNGT…DIKEVLDSLN (300 aa)) the chain is Cytoplasmic.

This sequence belongs to the class VI-like SAM-binding methyltransferase superfamily. CHO2 family.

Its subcellular location is the endoplasmic reticulum membrane. It carries out the reaction a 1,2-diacyl-sn-glycero-3-phosphoethanolamine + S-adenosyl-L-methionine = a 1,2-diacyl-sn-glycero-3-phospho-N-methylethanolamine + S-adenosyl-L-homocysteine + H(+). Its pathway is phospholipid metabolism; phosphatidylcholine biosynthesis. Its function is as follows. Catalyzes the first step of the methylation pathway of phosphatidylcholine biosynthesis, the SAM-dependent methylation of phosphatidylethanolamine (PE) to phosphatidylmonomethylethanolamine (PMME). This Vanderwaltozyma polyspora (strain ATCC 22028 / DSM 70294 / BCRC 21397 / CBS 2163 / NBRC 10782 / NRRL Y-8283 / UCD 57-17) (Kluyveromyces polysporus) protein is Phosphatidylethanolamine N-methyltransferase 1 (CHO2-1).